Reading from the N-terminus, the 403-residue chain is GTPase Obg (403 aa).

The 159-residue stretch at 1–159 (MKFIDESLIR…RDLLLELMLL (159 aa)) folds into the Obg domain. The OBG-type G domain maps to 160–333 (ADVGMLGFPN…LCRDIMDFII (174 aa)). Residues 166–173 (GFPNAGKS), 191–195 (FTTLV), 213–216 (DIPG), 283–286 (NKID), and 314–316 (SAA) contribute to the GTP site. The Mg(2+) site is built by Ser173 and Thr193. The disordered stretch occupies residues 363–403 (EYQFDDDEDWDDDWTEEDDDEDWDDDWTEEDDEGIEFIYKP). The segment covering 365–397 (QFDDDEDWDDDWTEEDDDEDWDDDWTEEDDEGI) has biased composition (acidic residues).

It belongs to the TRAFAC class OBG-HflX-like GTPase superfamily. OBG GTPase family. As to quaternary structure, monomer. It depends on Mg(2+) as a cofactor.

The protein resides in the cytoplasm. Its function is as follows. An essential GTPase which binds GTP, GDP and possibly (p)ppGpp with moderate affinity, with high nucleotide exchange rates and a fairly low GTP hydrolysis rate. Plays a role in control of the cell cycle, stress response, ribosome biogenesis and in those bacteria that undergo differentiation, in morphogenesis control. The chain is GTPase Obg from Haemophilus influenzae (strain PittEE).